The primary structure comprises 144 residues: Large ribosomal subunit protein uL13 (144 aa).

The protein belongs to the universal ribosomal protein uL13 family. Part of the 50S ribosomal subunit.

Functionally, this protein is one of the early assembly proteins of the 50S ribosomal subunit, although it is not seen to bind rRNA by itself. It is important during the early stages of 50S assembly. This Clostridium novyi (strain NT) protein is Large ribosomal subunit protein uL13.